Consider the following 319-residue polypeptide: Putative peptide permease protein BOV_A0351 (319 aa).

A run of 6 helical transmembrane segments spans residues 9-29 (LLIGLGMLLALTILIFVLLQL), 102-122 (LLLMAAGLAIAIVIGVTTGII), 138-158 (LALLGISSPAFLTALLGLYVF), 182-202 (LLRHLALPALVLSIGHAALIM), 242-262 (LPVVTLIGSTIGLAVGGAIFI), and 284-304 (YPVIMGATLVIGACVIIVNIL). One can recognise an ABC transmembrane type-1 domain in the interval 98–305 (IGPTLLLMAA…ACVIIVNILT (208 aa)).

This sequence belongs to the binding-protein-dependent transport system permease family. The complex is composed of two ATP-binding proteins (BOV_A0347 and BOV_A0348), two transmembrane proteins (BOV_A0350 and BOV_A0351) and a solute-binding protein (BOV_A0352).

The protein localises to the cell inner membrane. Functionally, probably part of an ABC transporter complex that could be involved in peptide import. Probably responsible for the translocation of the substrate across the membrane. The protein is Putative peptide permease protein BOV_A0351 of Brucella ovis (strain ATCC 25840 / 63/290 / NCTC 10512).